A 416-amino-acid polypeptide reads, in one-letter code: F-box/FBD/LRR-repeat protein At1g13570 (416 aa).

The 49-residue stretch at 5–53 (PDFISDLPQSIIENILTRLSIRDAIRTSVLSSKWRYKWSTLTDLVFDEK) folds into the F-box domain. LRR repeat units lie at residues 115–142 (VLKLGEGEFRVPACLFNCLKLTCLELCH), 164–189 (QILVAPEVIESLISGCPLLEFLSLSY), 203–229 (MYLYLDGEFKDIFLENTPKLVAISVSM), 238–263 (FEQSSDYNLVKFLGGVPLLEKLVGYI), and 294–321 (CFEDADEVLVLLRLVTHSPNLKELKVSA). Residues 346-384 (LPSLESVKITDASGIRYELEFIRFLLGTSPVLETVTVSS) enclose the FBD domain.

The chain is F-box/FBD/LRR-repeat protein At1g13570 from Arabidopsis thaliana (Mouse-ear cress).